Here is a 230-residue protein sequence, read N- to C-terminus: Putative N-acetylmannosamine-6-phosphate 2-epimerase (230 aa).

Belongs to the NanE family.

The enzyme catalyses an N-acyl-D-glucosamine 6-phosphate = an N-acyl-D-mannosamine 6-phosphate. It functions in the pathway amino-sugar metabolism; N-acetylneuraminate degradation; D-fructose 6-phosphate from N-acetylneuraminate: step 3/5. In terms of biological role, converts N-acetylmannosamine-6-phosphate (ManNAc-6-P) to N-acetylglucosamine-6-phosphate (GlcNAc-6-P). This chain is Putative N-acetylmannosamine-6-phosphate 2-epimerase, found in Malacoplasma penetrans (strain HF-2) (Mycoplasma penetrans).